Reading from the N-terminus, the 886-residue chain is uncharacterized protein (886 aa).

The signal sequence occupies residues 1–20 (MKILKSLVLLVLFIVMPAKA). Transmembrane regions (helical) follow at residues 520 to 540 (VIIFGLMFVAGTLKLTAIEVI), 563 to 583 (TYFFSVFTDGIDFFITNVVGA), 609 to 629 (LLFIELLQIHNGLAFIAIITI), 647 to 667 (IIAFIGVTVMISLAPFFIILM), 680 to 700 (ISTLLSYVVQPTILLIFFLLI), and 771 to 791 (FLVLFTTALLFYVYCLMSYGL).

The protein belongs to the TrbL/VirB6 family.

Its subcellular location is the cell membrane. This is an uncharacterized protein from Rickettsia typhi (strain ATCC VR-144 / Wilmington).